The chain runs to 497 residues: Probable malate:quinone oxidoreductase (497 aa).

The protein belongs to the MQO family. Requires FAD as cofactor.

It catalyses the reaction (S)-malate + a quinone = a quinol + oxaloacetate. The protein operates within carbohydrate metabolism; tricarboxylic acid cycle; oxaloacetate from (S)-malate (quinone route): step 1/1. This is Probable malate:quinone oxidoreductase from Prochlorococcus marinus (strain MIT 9515).